A 222-amino-acid chain; its full sequence is Ras-related protein RabT1 (222 aa).

37 to 44 (GDNKTGKS) provides a ligand contact to GTP. An Effector region motif is present at residues 59–66 (VSSIGVDF). GTP contacts are provided by residues 85 to 89 (DVNSC) and 145 to 148 (NKCD). At C219 the chain carries Cysteine methyl ester. A lipid anchor (S-geranylgeranyl cysteine) is attached at C219. The propeptide at 220–222 (NIL) is removed in mature form.

The protein belongs to the small GTPase superfamily. Rab family.

It localises to the cell membrane. The sequence is that of Ras-related protein RabT1 (rabT1) from Dictyostelium discoideum (Social amoeba).